Consider the following 141-residue polypeptide: ER membrane protein complex subunit 5 (141 aa).

Topologically, residues 1 to 6 are cytoplasmic; sequence MSFVSK. The helical transmembrane segment at 7-27 threads the bilayer; the sequence is LLYTVSALVLFHSGFSSYEFH. The Lumenal portion of the chain corresponds to 28-48; sequence HLLKLNSLNNAQGAISKLPKD. Residues 49-69 form a helical membrane-spanning segment; the sequence is IMYETYAGLILFVLAVFTSFE. The Cytoplasmic portion of the chain corresponds to 70 to 141; it reads KLQYLPIESN…WASNTVKKEK (72 aa).

This sequence belongs to the membrane magnesium transporter (TC 1.A.67) family. In terms of assembly, component of the ER membrane protein complex (EMC), which is composed of EMC1, EMC2, EMC3, EMC4, EMC5 and EMC6.

The protein resides in the endoplasmic reticulum membrane. Functionally, part of the endoplasmic reticulum membrane protein complex (EMC) that enables the energy-independent insertion into endoplasmic reticulum membranes of newly synthesized membrane proteins. Preferentially accommodates proteins with transmembrane domains that are weakly hydrophobic or contain destabilizing features such as charged and aromatic residues. Involved in the cotranslational insertion of multi-pass membrane proteins in which stop-transfer membrane-anchor sequences become ER membrane spanning helices. It is also required for the post-translational insertion of tail-anchored/TA proteins in endoplasmic reticulum membranes. By mediating the proper cotranslational insertion of N-terminal transmembrane domains in an N-exo topology, with translocated N-terminus in the lumen of the ER, controls the topology of multi-pass membrane proteins. The chain is ER membrane protein complex subunit 5 (EMC5) from Saccharomyces cerevisiae (strain ATCC 204508 / S288c) (Baker's yeast).